Reading from the N-terminus, the 255-residue chain is 5'-nucleotidase SurE (255 aa).

The a divalent metal cation site is built by aspartate 7, aspartate 8, serine 38, and asparagine 90.

It belongs to the SurE nucleotidase family. Requires a divalent metal cation as cofactor.

It is found in the cytoplasm. It catalyses the reaction a ribonucleoside 5'-phosphate + H2O = a ribonucleoside + phosphate. In terms of biological role, nucleotidase that shows phosphatase activity on nucleoside 5'-monophosphates. This chain is 5'-nucleotidase SurE, found in Picrophilus torridus (strain ATCC 700027 / DSM 9790 / JCM 10055 / NBRC 100828 / KAW 2/3).